A 144-amino-acid polypeptide reads, in one-letter code: Ribonuclease VapC45 (144 aa).

The Mg(2+) site is built by Asp-7 and Asp-102.

This sequence belongs to the PINc/VapC protein family. Requires Mg(2+) as cofactor.

In terms of biological role, toxic component of a type II toxin-antitoxin (TA) system. An RNase. Its cognate antitoxin is VapB45. The sequence is that of Ribonuclease VapC45 from Mycobacterium tuberculosis (strain CDC 1551 / Oshkosh).